Here is a 194-residue protein sequence, read N- to C-terminus: Probable GTP-binding protein EngB (194 aa).

Residues 22–194 (DLPEYALAGR…AWQFIKEGME (173 aa)) form the EngB-type G domain. GTP-binding positions include 30 to 37 (GRSNVGKS), 57 to 61 (GKTQT), 75 to 78 (DVPG), 142 to 145 (TKAD), and 174 to 176 (FSS). Residues S37 and T59 each contribute to the Mg(2+) site.

This sequence belongs to the TRAFAC class TrmE-Era-EngA-EngB-Septin-like GTPase superfamily. EngB GTPase family. Mg(2+) serves as cofactor.

Its function is as follows. Necessary for normal cell division and for the maintenance of normal septation. The sequence is that of Probable GTP-binding protein EngB from Listeria welshimeri serovar 6b (strain ATCC 35897 / DSM 20650 / CCUG 15529 / CIP 8149 / NCTC 11857 / SLCC 5334 / V8).